Reading from the N-terminus, the 84-residue chain is Cell division topological specificity factor (84 aa).

It belongs to the MinE family.

Prevents the cell division inhibition by proteins MinC and MinD at internal division sites while permitting inhibition at polar sites. This ensures cell division at the proper site by restricting the formation of a division septum at the midpoint of the long axis of the cell. The sequence is that of Cell division topological specificity factor from Hydrogenovibrio crunogenus (strain DSM 25203 / XCL-2) (Thiomicrospira crunogena).